The following is a 192-amino-acid chain: Mitochondrial import inner membrane translocase subunit TIM18 (192 aa).

The N-terminal 42 residues, 1 to 42, are a transit peptide targeting the mitochondrion; that stretch reads MLLFPGLKPVLNASTVIVNPVRAVFPGLVLSTKRSFYSINRL. Residues 43–88 lie on the Mitochondrial matrix side of the membrane; it reads NAENKINDIANTSKEASSSVQMFKPPEFSQFKDSYQKDYERIAKYT. Residues 89–109 form a helical membrane-spanning segment; that stretch reads LIPLTMVPFYASFTGGVINPL. The Mitochondrial intermembrane segment spans residues 110–113; it reads LDAS. The chain crosses the membrane as a helical span at residues 114 to 134; the sequence is LSSIFLIYLQYGFTSCIIDYI. Residues 135 to 144 lie on the Mitochondrial matrix side of the membrane; that stretch reads PKEKYPRWHK. A helical membrane pass occupies residues 145 to 165; it reads LALYCLYGGSMLSLYGIYELE. The Mitochondrial intermembrane segment spans residues 166–192; the sequence is TKNNGFVDLVKKLWNENDDHLYIFGRN.

This sequence belongs to the CybS family. In terms of assembly, component of the TIM22 complex, whose core is composed of TIM18, TIM22 and TIM54, associated with the peripheral proteins MRS5/TIM12 and the 70 kDa heterohexamer composed of TIM9 and TIM10 (or TIM8 and TIM13).

Its subcellular location is the mitochondrion inner membrane. Functionally, component of the TIM22 complex, a complex that mediates the import and insertion of multi-pass transmembrane proteins into the mitochondrial inner membrane. The TIM22 complex forms a twin-pore translocase that uses the membrane potential as external driving force. Its role in the complex is unclear but it may be involved in the assembly and stabilization of the TIM22 complex. The sequence is that of Mitochondrial import inner membrane translocase subunit TIM18 (TIM18) from Saccharomyces cerevisiae (strain ATCC 204508 / S288c) (Baker's yeast).